The following is a 191-amino-acid chain: tRNA-specific adenosine deaminase 2 (191 aa).

A CMP/dCMP-type deaminase domain is found at 20-145; it reads EETEKWMEEA…SVLNIASADL (126 aa). Residue His-71 coordinates Zn(2+). Catalysis depends on Glu-73, which acts as the Proton donor. Positions 107 and 110 each coordinate Zn(2+).

This sequence belongs to the cytidine and deoxycytidylate deaminase family. ADAT2 subfamily. Zn(2+) is required as a cofactor.

The catalysed reaction is adenosine(34) in tRNA + H2O + H(+) = inosine(34) in tRNA + NH4(+). Functionally, probably participates in deamination of adenosine-34 to inosine in many tRNAs. The protein is tRNA-specific adenosine deaminase 2 (ADAT2) of Homo sapiens (Human).